The following is a 761-amino-acid chain: Xaa-Pro dipeptidyl-peptidase (761 aa).

Catalysis depends on charge relay system residues Ser347, Asp467, and His497.

This sequence belongs to the peptidase S15 family. Homodimer.

It is found in the cytoplasm. The enzyme catalyses Hydrolyzes Xaa-Pro-|- bonds to release unblocked, N-terminal dipeptides from substrates including Ala-Pro-|-p-nitroanilide and (sequentially) Tyr-Pro-|-Phe-Pro-|-Gly-Pro-|-Ile.. In terms of biological role, removes N-terminal dipeptides sequentially from polypeptides having unsubstituted N-termini provided that the penultimate residue is proline. The chain is Xaa-Pro dipeptidyl-peptidase from Streptococcus agalactiae serotype Ia (strain ATCC 27591 / A909 / CDC SS700).